Here is a 193-residue protein sequence, read N- to C-terminus: Flagellar transcriptional regulator FlhC (193 aa).

Zn(2+) is bound by residues Cys137, Cys140, Cys158, and Cys161.

Belongs to the FlhC family. As to quaternary structure, heterohexamer composed of two FlhC and four FlhD subunits. Each FlhC binds a FlhD dimer, forming a heterotrimer, and a hexamer assembles by dimerization of two heterotrimers. Zn(2+) serves as cofactor.

The protein localises to the cytoplasm. Functionally, functions in complex with FlhD as a master transcriptional regulator that regulates transcription of several flagellar and non-flagellar operons by binding to their promoter region. Activates expression of class 2 flagellar genes, including fliA, which is a flagellum-specific sigma factor that turns on the class 3 genes. Also regulates genes whose products function in a variety of physiological pathways. This is Flagellar transcriptional regulator FlhC from Pectobacterium carotovorum (Erwinia carotovora).